Reading from the N-terminus, the 141-residue chain is Large ribosomal subunit protein uL13 (141 aa).

The protein belongs to the universal ribosomal protein uL13 family. In terms of assembly, part of the 50S ribosomal subunit.

Its function is as follows. This protein is one of the early assembly proteins of the 50S ribosomal subunit, although it is not seen to bind rRNA by itself. It is important during the early stages of 50S assembly. The polypeptide is Large ribosomal subunit protein uL13 (Helicobacter pylori (strain G27)).